The following is a 278-amino-acid chain: Serine/arginine-rich splicing factor SR34B (278 aa).

An RRM 1 domain is found at 7 to 82; the sequence is RTIYVGNLPG…HHLRVELAHG (76 aa). The span at 81-91 shows a compositional bias: basic and acidic residues; that stretch reads HGGRRSSHDAR. 2 disordered regions span residues 81 to 121 and 192 to 263; these read HGGR…SEYR and EYDS…RSLS. A compositionally biased stretch (gly residues) spans 95–107; that stretch reads SGRGRGGRGGGDG. Composition is skewed to basic and acidic residues over residues 108–120 and 192–201; these read GGRE…RSEY and EYDSRRDSRS. The RRM 2 domain maps to 120–195; sequence YRVVVSGLPS…EYVRVREYDS (76 aa). Phosphoserine is present on residues serine 201, serine 203, serine 225, serine 231, serine 233, serine 242, serine 250, serine 259, and serine 263. The span at 207-243 shows a compositional bias: basic residues; sequence SYSKSRSRGRSPSRSRSRSRSRSKSRSPKAKSLRRSP.

This sequence belongs to the splicing factor SR family. SR subfamily. Component of the spliceosome.

It localises to the nucleus speckle. The protein localises to the nucleus. The protein resides in the nucleoplasm. Its function is as follows. Probably involved in intron recognition and spliceosome assembly. This chain is Serine/arginine-rich splicing factor SR34B (SR34B), found in Arabidopsis thaliana (Mouse-ear cress).